The sequence spans 1309 residues: Disease resistance protein RPP2A (1309 aa).

Residues 9–173 enclose the TIR 1 domain; the sequence is RRYDVFPSFS…MVADDVSKKL (165 aa). Residue Glu84 is part of the active site. The region spanning 187-418 is the NB-ARC 1 domain; sequence EAHLEAMSSI…FKKTLRNYLP (232 aa). The ALOG domain maps to 488–585; it reads PNRRHSNDDW…KECILVFSCH (98 aa). The TIR 2 domain occupies 574-737; sequence REKECILVFS…EVVRNASLRL (164 aa). Positions 755–987 constitute an NB-ARC 2 domain; the sequence is SQSTDVEIMG…IFLDLACFFR (233 aa). A coiled-coil region spans residues 1114–1141; sequence LPHGLDTLPDELSLLHWENYPLVYLPQK. 6 LRR repeats span residues 1145-1167, 1168-1195, 1214-1237, 1238-1258, 1259-1283, and 1285-1307; these read VNLV…KKNL, EKLK…NLEH, CGKL…MVDL, TTLK…QDFA, PNLE…NLTE, and VTLD…EIIR.

The protein belongs to the disease resistance TIR-NB-LRR family.

It carries out the reaction NAD(+) + H2O = ADP-D-ribose + nicotinamide + H(+). Disease resistance protein that cooperates with RPP2B to confer resistance to Hyaloperonospora parasitica isolate Cala2. The chain is Disease resistance protein RPP2A from Arabidopsis thaliana (Mouse-ear cress).